A 140-amino-acid polypeptide reads, in one-letter code: Pro-vaccinia growth factor (140 aa).

Positions 1 to 18 (MSMKYLMLLFAAMIIRSF) are cleaved as a signal peptide. Over 19-100 (ADSGNAIETT…SENPNTTTSY (82 aa)) the chain is Extracellular. Asn-34 carries an N-linked (GlcNAc...) asparagine; by host glycan. Residues 41-81 (AIRLCGPEGDGYCLHGDCIHARDIDGMYCRCSHGYTGIRCQ) enclose the EGF-like domain. Cystine bridges form between Cys-45/Cys-58, Cys-53/Cys-69, and Cys-71/Cys-80. Residue Asn-95 is glycosylated (N-linked (GlcNAc...) asparagine; by host). Residues 101-121 (IPSPGIVLVLVGIIIITCCSL) form a helical membrane-spanning segment. Over 122–140 (SVYRFTRRTKLPIQDMVVP) the chain is Cytoplasmic.

It belongs to the orthopoxvirus OPG019 family. Vaccinia growth factor interacts with host EGFR and promotes EGFR dimerization.

The protein resides in the host membrane. It is found in the secreted. Stimulates cellular proliferation (hyperplasia)and mobility around infected cells to promote rapid and efficient spread of infection. This effect is beneficial for virus replication in vivo, because poxviruses replicate possibly better in proliferating cells than in quiescent cells. Acts by binding host EGFR, inducing its dimerization, autophosphorylation and leading to activation of several cellular pathways regulating cell proliferation or cell survival. The activation by host EGFR of mitogen activated protein kinases (MAPK) and extracellular-signal regulated kinases (ERK) are essential for the positive effect of vaccinia growth factor on poxvirus virulence in vivo. The protein is Pro-vaccinia growth factor (OPG019) of Vaccinia virus (strain L-IVP) (VACV).